A 209-amino-acid chain; its full sequence is Superoxide dismutase [Mn/Fe] (209 aa).

Positions 38, 90, 172, and 176 each coordinate Fe(3+). Mn(2+)-binding residues include H38, H90, D172, and H176.

It belongs to the iron/manganese superoxide dismutase family. The cofactor is Mn(2+). Fe(3+) serves as cofactor.

The enzyme catalyses 2 superoxide + 2 H(+) = H2O2 + O2. In terms of biological role, destroys superoxide anion radicals which are normally produced within the cells and which are toxic to biological systems. Catalyzes the dismutation of superoxide anion radicals into O2 and H2O2 by successive reduction and oxidation of the transition metal ion at the active site. In Rickettsia bellii (strain RML369-C), this protein is Superoxide dismutase [Mn/Fe] (sodB).